Here is a 227-residue protein sequence, read N- to C-terminus: uncharacterized protein (227 aa).

17–24 is a binding site for ATP; it reads GKTGCGKT.

This is an uncharacterized protein from Methanocaldococcus jannaschii (strain ATCC 43067 / DSM 2661 / JAL-1 / JCM 10045 / NBRC 100440) (Methanococcus jannaschii).